A 420-amino-acid polypeptide reads, in one-letter code: Dihydrolipoyllysine-residue succinyltransferase component of 2-oxoglutarate dehydrogenase complex (420 aa).

The 76-residue stretch at 3 to 78 folds into the Lipoyl-binding domain; that stretch reads KINILVPDLP…ISQQTLGEIN (76 aa). K44 is subject to N6-lipoyllysine. Catalysis depends on residues H391 and D395.

This sequence belongs to the 2-oxoacid dehydrogenase family. Forms a 24-polypeptide structural core with octahedral symmetry. Part of the 2-oxoglutarate dehydrogenase (OGDH) complex composed of E1 (2-oxoglutarate dehydrogenase), E2 (dihydrolipoamide succinyltransferase) and E3 (dihydrolipoamide dehydrogenase); the complex contains multiple copies of the three enzymatic components (E1, E2 and E3). Requires (R)-lipoate as cofactor.

It carries out the reaction N(6)-[(R)-dihydrolipoyl]-L-lysyl-[protein] + succinyl-CoA = N(6)-[(R)-S(8)-succinyldihydrolipoyl]-L-lysyl-[protein] + CoA. The protein operates within amino-acid degradation; L-lysine degradation via saccharopine pathway; glutaryl-CoA from L-lysine: step 6/6. Its function is as follows. E2 component of the 2-oxoglutarate dehydrogenase (OGDH) complex which catalyzes the second step in the conversion of 2-oxoglutarate to succinyl-CoA and CO(2). This chain is Dihydrolipoyllysine-residue succinyltransferase component of 2-oxoglutarate dehydrogenase complex (sucB), found in Buchnera aphidicola subsp. Acyrthosiphon pisum (strain APS) (Acyrthosiphon pisum symbiotic bacterium).